The sequence spans 725 residues: Aminopeptidase RNPEPL1 (725 aa).

326–330 serves as a coordination point for substrate; that stretch reads VAMEN. A Zn(2+)-binding site is contributed by His353. Glu354 serves as the catalytic Proton acceptor. Residues His357 and Glu376 each contribute to the Zn(2+) site. Positions 676–699 are disordered; that stretch reads GLGSSTEPASEPSTELGKAEADTD. The span at 679–690 shows a compositional bias: low complexity; it reads SSTEPASEPSTE.

Belongs to the peptidase M1 family. Zn(2+) serves as cofactor. As to expression, ubiquitously expressed. Expressed at relatively higher levels in heart and skeletal muscle.

It catalyses the reaction Release of N-terminal amino acids, preferentially methionine, from peptides and arylamides.. With respect to regulation, inhibited by calcium but not affected by chloride ions. Inhibited by amastatin and to a lower extent by bestatin. Weakly inhibited by puromycin. Functionally, broad specificity aminopeptidase which preferentially hydrolyzes an N-terminal methionine, citrulline or glutamine. The chain is Aminopeptidase RNPEPL1 from Homo sapiens (Human).